The following is a 170-amino-acid chain: Opacity-related protein POPM3 (170 aa).

The protein belongs to the opacity porin family.

It is found in the cell outer membrane. This Neisseria meningitidis serogroup C protein is Opacity-related protein POPM3 (opr).